The sequence spans 352 residues: tRNA pseudouridine synthase D (352 aa).

Asp81 serves as the catalytic Nucleophile. The TRUD domain occupies 157-303; it reads GVPNYFGTQR…MDHERRILRL (147 aa).

It belongs to the pseudouridine synthase TruD family.

The catalysed reaction is uridine(13) in tRNA = pseudouridine(13) in tRNA. Functionally, responsible for synthesis of pseudouridine from uracil-13 in transfer RNAs. The protein is tRNA pseudouridine synthase D of Pseudomonas putida (strain ATCC 700007 / DSM 6899 / JCM 31910 / BCRC 17059 / LMG 24140 / F1).